The sequence spans 578 residues: Dapdiamide synthesis protein DdaD (578 aa).

The 76-residue stretch at 498 to 573 (ESISATEHQI…KMAAWLDASS (76 aa)) folds into the Carrier domain. O-(pantetheine 4'-phosphoryl)serine is present on Ser533.

It belongs to the ATP-dependent AMP-binding enzyme family. Requires pantetheine 4'-phosphate as cofactor.

Its pathway is antibiotic biosynthesis. Its function is as follows. Involved in dapdiamide antibiotics biosynthesis. Activates and sequesters N-beta-fumaramoyl-DAP as a covalently tethered thioester for subsequent oxidative modification of the fumaramoyl group. The polypeptide is Dapdiamide synthesis protein DdaD (Enterobacter agglomerans (Erwinia herbicola)).